The following is a 297-amino-acid chain: MENLLSVENAILITGPTASGKSALAVELAKRYGGAVVNADSMQVYDTLRVLTARPSEEEMQGVPHHLYGHVPAGAAYSTGAWLRDVSALLPALKAAGQLPVFVGGTGLYFKALTGGLSDMPEIPEGLREELRMRLVAEGPEGLHAELEAIDPAMSASLNRQDGQRIVRALEVIKATGRSIAEFHRRLGPVLIDADEARKIVVLPDRAVLHARINGRFEKMLQQGAESEVRALLALGLPAVAPVMKAIGVSQITAMLKGEMTREEVLEKGAAATRQYAKRQMTWFRNQMDESWERLAP.

15-22 provides a ligand contact to ATP; the sequence is GPTASGKS. 17-22 is a substrate binding site; the sequence is TASGKS. 2 interaction with substrate tRNA regions span residues 40–43 and 164–168; these read DSMQ and QRIVR.

The protein belongs to the IPP transferase family. Monomer. It depends on Mg(2+) as a cofactor.

The enzyme catalyses adenosine(37) in tRNA + dimethylallyl diphosphate = N(6)-dimethylallyladenosine(37) in tRNA + diphosphate. Catalyzes the transfer of a dimethylallyl group onto the adenine at position 37 in tRNAs that read codons beginning with uridine, leading to the formation of N6-(dimethylallyl)adenosine (i(6)A). This is tRNA dimethylallyltransferase from Rhizobium etli (strain CIAT 652).